We begin with the raw amino-acid sequence, 1019 residues long: Sca1 complex protein phr (1019 aa).

Disordered stretches follow at residues 89–118, 131–202, 265–287, and 512–546; these read IVIN…SSNF, AFNN…INNN, QQLN…NSAN, and STNN…TNNL. Residues 93 to 102 show a composition bias toward low complexity; that stretch reads SSSSSSSSSS. Residues 141–155 are compositionally biased toward basic and acidic residues; the sequence is NRKEKEKDKDKDHQD. Residues 158 to 188 adopt a coiled-coil conformation; it reads NINNINNINNNINNNINNNNNNNNNNNNNNN. Positions 158–202 are enriched in low complexity; sequence NINNINNINNNINNNINNNNNNNNNNNNNNNMHNPTSSSPSINNN. The 102-residue stretch at 735 to 836 folds into the PH domain; sequence EIKKKGYLFK…WIKAIKFNCF (102 aa). Low complexity predominate over residues 860 to 872; it reads VAGSGSNNGNNNG. Disordered regions lie at residues 860–890, 904–951, and 977–1019; these read VAGS…GSFI, NLSI…QQQL, and SSYT…SKLK. The span at 879–890 shows a compositional bias: polar residues; that stretch reads TTQQLNNSGSFI. Over residues 977–986 the composition is skewed to low complexity; that stretch reads SSYTDSMSGS. Polar residues predominate over residues 987 to 1019; sequence PPDSNGQVFPQSPQLKKTLFQRTTSFSKGSKLK.

In terms of assembly, component of the Sca1 complex composed of at least gefA, gefH, scaA, phr, and the protein phosphatase 2A subunits pppA and pho2B. Interacts directly with gefH.

The protein resides in the cell membrane. Component of the Sca1 complex, a regulator of cell motility, chemotaxis and signal relay. The Sca1 complex is recruited to the plasma membrane in a chemoattractant- and F-actin-dependent manner and is enriched at the leading edge of chemotaxing cells where it regulates F-actin dynamics and signal relay by controlling the activation of rasC and the downstream target of rapamycin complex 2 (TORC2)-Akt/protein kinase B (PKB) pathway. The sequence is that of Sca1 complex protein phr from Dictyostelium discoideum (Social amoeba).